Consider the following 406-residue polypeptide: Multifunctional CCA protein (406 aa).

Positions 8 and 11 each coordinate ATP. CTP contacts are provided by Gly-8 and Arg-11. Asp-21 and Asp-23 together coordinate Mg(2+). Residues Arg-91, Arg-138, and Arg-141 each coordinate ATP. Residues Arg-91, Arg-138, and Arg-141 each coordinate CTP. An HD domain is found at 229-331; sequence TGIHQEMVSD…LELLGRCDAL (103 aa).

This sequence belongs to the tRNA nucleotidyltransferase/poly(A) polymerase family. Bacterial CCA-adding enzyme type 1 subfamily. As to quaternary structure, monomer. Can also form homodimers and oligomers. The cofactor is Mg(2+). Ni(2+) is required as a cofactor.

The catalysed reaction is a tRNA precursor + 2 CTP + ATP = a tRNA with a 3' CCA end + 3 diphosphate. It carries out the reaction a tRNA with a 3' CCA end + 2 CTP + ATP = a tRNA with a 3' CCACCA end + 3 diphosphate. In terms of biological role, catalyzes the addition and repair of the essential 3'-terminal CCA sequence in tRNAs without using a nucleic acid template. Adds these three nucleotides in the order of C, C, and A to the tRNA nucleotide-73, using CTP and ATP as substrates and producing inorganic pyrophosphate. tRNA 3'-terminal CCA addition is required both for tRNA processing and repair. Also involved in tRNA surveillance by mediating tandem CCA addition to generate a CCACCA at the 3' terminus of unstable tRNAs. While stable tRNAs receive only 3'-terminal CCA, unstable tRNAs are marked with CCACCA and rapidly degraded. The chain is Multifunctional CCA protein from Stenotrophomonas maltophilia (strain K279a).